A 102-amino-acid polypeptide reads, in one-letter code: RNA-binding protein Hfq (102 aa).

The 60-residue stretch at 9 to 68 (DPFLNALRRERVPVSIYLVNGIKLQGQIESFDQFVILLKNTVSQMVYKHAISTVVPSRPV) folds into the Sm domain. Residues 64 to 102 (PSRPVSHHSNTPSGGTSNYHHGNNPSAPQQPQQESDDAE) form a disordered region. A compositionally biased stretch (polar residues) spans 70-96 (HHSNTPSGGTSNYHHGNNPSAPQQPQQ).

This sequence belongs to the Hfq family. As to quaternary structure, homohexamer.

Its function is as follows. RNA chaperone that binds small regulatory RNA (sRNAs) and mRNAs to facilitate mRNA translational regulation in response to envelope stress, environmental stress and changes in metabolite concentrations. Also binds with high specificity to tRNAs. This chain is RNA-binding protein Hfq, found in Serratia proteamaculans (strain 568).